The chain runs to 524 residues: L-lactate permease (524 aa).

13 helical membrane passes run 12–34 (LAVS…TVFK), 38–60 (IQAA…HLPF), 67–89 (IVQG…VWLY), 127–149 (LEGA…SLGF), 156–178 (MLCL…VGII), 193–215 (SMMT…IWLM), 224–246 (ILPA…TIFI), 250–267 (LADI…ALFL), 297–319 (WSPF…KGLL), 339–361 (IEVG…VTTV), 374–396 (SLLK…IIGI), 411–433 (EAVA…IGVF), and 505–522 (YSFG…ILSL).

This sequence belongs to the lactate permease family.

Its subcellular location is the cell membrane. In terms of biological role, may play a role in L-lactate transport. The protein is L-lactate permease (lctP) of Halalkalibacterium halodurans (strain ATCC BAA-125 / DSM 18197 / FERM 7344 / JCM 9153 / C-125) (Bacillus halodurans).